We begin with the raw amino-acid sequence, 249 residues long: ATP synthase subunit a, chloroplastic (249 aa).

A run of 5 helical transmembrane segments spans residues 40 to 60 (QVLI…VLAI), 97 to 117 (VPFI…GALL), 136 to 156 (INTT…AGLS), 201 to 221 (LVVV…VMFL), and 222 to 242 (GLFT…AYIG).

It belongs to the ATPase A chain family. F-type ATPases have 2 components, CF(1) - the catalytic core - and CF(0) - the membrane proton channel. CF(1) has five subunits: alpha(3), beta(3), gamma(1), delta(1), epsilon(1). CF(0) has four main subunits: a, b, b' and c.

It localises to the plastid. Its subcellular location is the chloroplast thylakoid membrane. Its function is as follows. Key component of the proton channel; it plays a direct role in the translocation of protons across the membrane. The polypeptide is ATP synthase subunit a, chloroplastic (Olimarabidopsis pumila (Dwarf rocket)).